A 265-amino-acid chain; its full sequence is Enolase-phosphatase E1 (265 aa).

Aspartate 18 and glutamate 20 together coordinate Mg(2+). Residues 144-145 and lysine 188 each bind substrate; that span reads SS. Aspartate 215 is a binding site for Mg(2+).

Belongs to the HAD-like hydrolase superfamily. MasA/MtnC family. As to quaternary structure, monomer. Mg(2+) is required as a cofactor.

The protein localises to the cytoplasm. It is found in the nucleus. The catalysed reaction is 5-methylsulfanyl-2,3-dioxopentyl phosphate + H2O = 1,2-dihydroxy-5-(methylsulfanyl)pent-1-en-3-one + phosphate. The protein operates within amino-acid biosynthesis; L-methionine biosynthesis via salvage pathway; L-methionine from S-methyl-5-thio-alpha-D-ribose 1-phosphate: step 3/6. It functions in the pathway amino-acid biosynthesis; L-methionine biosynthesis via salvage pathway; L-methionine from S-methyl-5-thio-alpha-D-ribose 1-phosphate: step 4/6. Functionally, bifunctional enzyme that catalyzes the enolization of 2,3-diketo-5-methylthiopentyl-1-phosphate (DK-MTP-1-P) into the intermediate 2-hydroxy-3-keto-5-methylthiopentenyl-1-phosphate (HK-MTPenyl-1-P), which is then dephosphorylated to form the acireductone 1,2-dihydroxy-3-keto-5-methylthiopentene (DHK-MTPene). The sequence is that of Enolase-phosphatase E1 from Candida albicans (strain SC5314 / ATCC MYA-2876) (Yeast).